We begin with the raw amino-acid sequence, 88 residues long: Small ribosomal subunit protein uS15c (88 aa).

It belongs to the universal ribosomal protein uS15 family. Part of the 30S ribosomal subunit.

The protein resides in the plastid. Its subcellular location is the chloroplast. The sequence is that of Small ribosomal subunit protein uS15c (rps15) from Draba nemorosa (Woodland whitlowgrass).